The following is a 774-amino-acid chain: Dapper homolog 2 (774 aa).

A coiled-coil region spans residues 67–93 (PEQQLEAALAALQEQLSRLRQQDIGLK). Disordered regions lie at residues 188 to 225 (RPQATEEGARPPGSVEDAGQPWGTFWPRPVSTGDLDRA), 295 to 319 (TPQRGGPSFPRESPRGPAGLNTIQT), 345 to 500 (TPAK…EKIK), and 624 to 710 (CPES…GAQS). Positions 438–452 (VQASPSSKAQQTPSA) are enriched in polar residues. The span at 637 to 648 (RRAGGPLARGRP) shows a compositional bias: low complexity. 2 stretches are compositionally biased toward basic and acidic residues: residues 655 to 672 (AYTRSDSEPSKHSAECDP) and 686 to 700 (SSDHTTNRFGDRESS). The short motif at 771-774 (MTMV) is the PDZ-binding element.

It belongs to the dapper family. In terms of assembly, can form homodimers and heterodimers with DACT1 or DACT3. Interacts with CSNK1D, PKA catalytic subunit, PKC-type kinase, CSNK2B, DVL1, DVL2, DVL3, VANGL1, VANGL2, TGFBR1, CTNNB1, CTNND2, CTNND1, LEF1, TCF7, TCF7L1 and HDAC1.

Involved in regulation of intracellular signaling pathways during development. Negatively regulates the Nodal signaling pathway, possibly by promoting the lysosomal degradation of Nodal receptors, such as TGFBR1. May be involved in control of the morphogenetic behavior of kidney ureteric bud cells by keeping cells epithelial and restraining their mesenchymal character. May play an inhibitory role in the re-epithelialization of skin wounds by attenuating TGF-beta signaling. The polypeptide is Dapper homolog 2 (DACT2) (Homo sapiens (Human)).